Here is a 708-residue protein sequence, read N- to C-terminus: MLRMRVPALLVLLFCFRGRAGPSPHFLQQPEDLVVLLGEEARLPCALGAYWGLVQWTKSGLALGGQRDLPGWSRYWISGNAANGQHDLHIRPVELEDEASYECQATQAGLRSRPAQLHVLVPPEAPQVLGGPSVSLVAGVPANLTCRSRGDARPTPELLWFRDGVLLDGATFHQTLLKEGTPGSVESTLTLTPFSHDDGATFVCRARSQALPTGRDTAITLSLQYPPEVTLSASPHTVQEGEKVIFLCQATAQPPVTGYRWAKGGSPVLGARGPRLEVVADASFLTEPVSCEVSNAVGSANRSTALDVLFGPILQAKPEPVSVDVGEDASFSCAWRGNPLPRVTWTRRGGAQVLGSGATLRLPSVGPEDAGDYVCRAEAGLSGLRGGAAEARLTVNAPPVVTALHSAPAFLRGPARLQCLVFASPAPDAVVWSWDEGFLEAGSQGRFLVETFPAPESRGGLGPGLISVLHISGTQESDFSRSFNCSARNRLGEGGAQASLGRRDLLPTVRIVAGVAAATTTLLMVITGVALCCWRHSKASASFSEQKNLMRIPGSSDGSSSRGPEEEETGSREDRGPIVHTDHSDLVLEEEGTLETKDPTNGYYKVRGVSVSLSLGEAPGGGLFLPPPSPLGPPGTPTFYDFNPHLGMVPPCRLYRARAGYLTTPHPRAFTSYIKPTSFGPPDLAPGTPPFPYAAFPTPSHPRLQTHV.

A signal peptide spans 1 to 20 (MLRMRVPALLVLLFCFRGRA). Topologically, residues 21-510 (GPSPHFLQQP…GRRDLLPTVR (490 aa)) are extracellular. Ig-like C2-type domains are found at residues 24–118 (PHFL…AQLH), 123–222 (PEAP…ITLS), 227–307 (PEVT…TALD), 312–394 (PILQ…ARLT), and 398–501 (PPVV…ASLG). A disulfide bond links Cys45 and Cys103. Asn143 carries an N-linked (GlcNAc...) asparagine glycan. 2 disulfides stabilise this stretch: Cys146/Cys204 and Cys248/Cys291. A Cell attachment site motif is present at residues 149–151 (RGD). Residue Asn301 is glycosylated (N-linked (GlcNAc...) asparagine). 2 cysteine pairs are disulfide-bonded: Cys333–Cys375 and Cys419–Cys485. Asn484 carries an N-linked (GlcNAc...) asparagine glycan. Residues 511-531 (IVAGVAAATTTLLMVITGVAL) form a helical membrane-spanning segment. The Cytoplasmic segment spans residues 532 to 708 (CCWRHSKASA…PSHPRLQTHV (177 aa)). Residues 545 to 601 (EQKNLMRIPGSSDGSSSRGPEEEETGSREDRGPIVHTDHSDLVLEEEGTLETKDPTN) are disordered. The span at 553 to 562 (PGSSDGSSSR) shows a compositional bias: low complexity. The span at 569–586 (TGSREDRGPIVHTDHSDL) shows a compositional bias: basic and acidic residues. A Phosphoserine modification is found at Ser571. 3 positions are modified to phosphotyrosine: Tyr603, Tyr604, and Tyr661. The tract at residues 684 to 708 (LAPGTPPFPYAAFPTPSHPRLQTHV) is disordered.

It belongs to the immunoglobulin superfamily. As to quaternary structure, homodimer. Interacts with NPHS2/podocin (via the C-terminus). Interacts with NPHS1 (via the Ig-like domains). Interacts with FYN. In terms of processing, N-glycosylated. Post-translationally, the extracellular domain is cleaved leading to the generation of a soluble fragment and a membrane-bound C-terminal fragment, which is further cleaved by gamma-secretase. As to expression, highly expressed in beta-cells of the pancreatic islets.

The protein localises to the cell membrane. Functionally, may regulate basal insulin secretion. The sequence is that of Kin of IRRE-like protein 2 (KIRREL2) from Homo sapiens (Human).